Consider the following 110-residue polypeptide: UPF0122 protein SaurJH9_1295 (110 aa).

The protein belongs to the UPF0122 family.

Its function is as follows. Might take part in the signal recognition particle (SRP) pathway. This is inferred from the conservation of its genetic proximity to ftsY/ffh. May be a regulatory protein. The chain is UPF0122 protein SaurJH9_1295 from Staphylococcus aureus (strain JH9).